Reading from the N-terminus, the 314-residue chain is DNA-directed RNA polymerase subunit alpha (314 aa).

Positions 1-228 (MIEIEKPVIE…EHLNIFVGLT (228 aa)) are alpha N-terminal domain (alpha-NTD). Residues 245–314 (KEKVLEMTIE…ELGLGLRKEE (70 aa)) are alpha C-terminal domain (alpha-CTD).

The protein belongs to the RNA polymerase alpha chain family. Homodimer. The RNAP catalytic core consists of 2 alpha, 1 beta, 1 beta' and 1 omega subunit. When a sigma factor is associated with the core the holoenzyme is formed, which can initiate transcription.

The catalysed reaction is RNA(n) + a ribonucleoside 5'-triphosphate = RNA(n+1) + diphosphate. Functionally, DNA-dependent RNA polymerase catalyzes the transcription of DNA into RNA using the four ribonucleoside triphosphates as substrates. The polypeptide is DNA-directed RNA polymerase subunit alpha (Halalkalibacterium halodurans (strain ATCC BAA-125 / DSM 18197 / FERM 7344 / JCM 9153 / C-125) (Bacillus halodurans)).